A 476-amino-acid polypeptide reads, in one-letter code: Aspartyl/glutamyl-tRNA(Asn/Gln) amidotransferase subunit B (476 aa).

It belongs to the GatB/GatE family. GatB subfamily. As to quaternary structure, heterotrimer of A, B and C subunits.

It catalyses the reaction L-glutamyl-tRNA(Gln) + L-glutamine + ATP + H2O = L-glutaminyl-tRNA(Gln) + L-glutamate + ADP + phosphate + H(+). It carries out the reaction L-aspartyl-tRNA(Asn) + L-glutamine + ATP + H2O = L-asparaginyl-tRNA(Asn) + L-glutamate + ADP + phosphate + 2 H(+). In terms of biological role, allows the formation of correctly charged Asn-tRNA(Asn) or Gln-tRNA(Gln) through the transamidation of misacylated Asp-tRNA(Asn) or Glu-tRNA(Gln) in organisms which lack either or both of asparaginyl-tRNA or glutaminyl-tRNA synthetases. The reaction takes place in the presence of glutamine and ATP through an activated phospho-Asp-tRNA(Asn) or phospho-Glu-tRNA(Gln). The protein is Aspartyl/glutamyl-tRNA(Asn/Gln) amidotransferase subunit B of Oleidesulfovibrio alaskensis (strain ATCC BAA-1058 / DSM 17464 / G20) (Desulfovibrio alaskensis).